A 2357-amino-acid polypeptide reads, in one-letter code: Protein transport protein Sec16A (2357 aa).

2 disordered regions span residues 1–25 and 57–303; these read MQPP…RSVF and FSRQ…STFR. Composition is skewed to low complexity over residues 64–76 and 210–227; these read STPL…SSPP and QMPG…PSGQ. Positions 285–303 are enriched in polar residues; that stretch reads HLQSGSHLANNSDPESTFR. Phosphoserine occurs at positions 296, 314, and 331. Disordered regions lie at residues 335-359, 508-540, 553-603, 758-828, 924-987, 1006-1038, and 1059-1151; these read NPLA…GSGC, APDA…ARPQ, KPED…TGIF, VQPP…NPPV, LLVQ…SSHQ, VNVY…PNLD, and QELV…APGP. The span at 520 to 536 shows a compositional bias: low complexity; the sequence is SVSSSYSSRSHGRLSGS. A phosphoserine mark is found at S559, S569, S587, S589, and S592. T593 bears the Phosphothreonine mark. S595 is subject to Phosphoserine. Polar residues-rich tracts occupy residues 766-778 and 803-825; these read SGQQ…SAAP and LQSQ…SLQN. Residues 1006–1028 are compositionally biased toward polar residues; the sequence is VNVYNPSHSDSLASQQSVASHPR. The segment at 1019-1890 is required for localization to endoplasmic reticulum exit sites; sequence SQQSVASHPR…QQVERQIKEG (872 aa). S1069 is modified (phosphoserine). Positions 1080–1101 are enriched in polar residues; it reads ELSNPESLPAQGQAQNSAQSPA. Positions 1101–1400 are interaction with MIA3; that stretch reads ASLVLVDAGQ…EAPLPPGSFH (300 aa). The segment at 1102 to 1405 is required for endoplasmic reticulum localization; the sequence is SLVLVDAGQQ…PGSFHGDFAY (304 aa). Over residues 1118 to 1131 the composition is skewed to low complexity; sequence QSSSVSLVSSGSGQ. Positions 1138–1151 are enriched in pro residues; sequence QPWPQPVPALAPGP. A phosphoserine mark is found at S1207, S1229, and S1305. The tract at residues 1215 to 1248 is disordered; it reads YPEPERPSSRASHSSERPPPRQGYPEGYYSSKSG. The span at 1216–1233 shows a compositional bias: basic and acidic residues; it reads PEPERPSSRASHSSERPP. Residues 1307-1322 show a composition bias toward basic and acidic residues; that stretch reads FGDRPEKRDNNWRYDP. The segment at 1307-1378 is disordered; that stretch reads FGDRPEKRDN…SLSSHSHQSQ (72 aa). T1325 is subject to Phosphothreonine. Residues S1327, S1347, S1350, S1356, S1359, S1362, S1369, S1573, and S1601 each carry the phosphoserine modification. Residues 1333–1354 show a composition bias toward basic and acidic residues; sequence DPHRDPYGEEVDRRSVHSEHSA. Residues 1356 to 1375 show a composition bias toward low complexity; the sequence is SLHSAHSLASRRSSLSSHSH. Positions 1434–1890 are central conserved domain (CCD); mediates interaction with RNF183, LRRK2 and SEC13; sequence QVSSRPTSPE…QQVERQIKEG (457 aa). Residue T1907 is modified to Phosphothreonine. A phosphoserine mark is found at S1939, S1964, S2022, and S2042. 3 disordered regions span residues 2049-2110, 2141-2181, and 2226-2328; these read KFAN…SWFF, VNLN…PVNM, and NLFV…MPFY. T2054 carries the phosphothreonine modification. Residues S2056, S2073, and S2083 each carry the phosphoserine modification. The span at 2087 to 2106 shows a compositional bias: basic and acidic residues; that stretch reads ETKRPGQAAKKETKEPKKGE. Positions 2106–2357 are required for interaction with SEC23A; the sequence is ESWFFRWLPG…IGQRKHLVLN (252 aa). 2 positions are modified to phosphoserine: S2271 and S2291. Composition is skewed to low complexity over residues 2289-2302 and 2310-2324; these read ELSR…LSRE and APGD…PSGA.

It belongs to the SEC16 family. SEC16A and SEC16B are each present in multiple copies in a heteromeric complex. Interacts with SEC23A. Interacts with RNF183 and RNF152. Interacts with LRRK2 (via ROC domain). Interacts with SEC13. Interacts with RAB10. Interacts with MIA3. Interacts with GORASP2 in response to ER stress. As to expression, ubiquitous. Expressed at higher levels in the pancreas.

The protein resides in the endoplasmic reticulum membrane. Its subcellular location is the golgi apparatus membrane. It localises to the cytoplasm. It is found in the perinuclear region. The protein localises to the cytosol. The protein resides in the microsome membrane. In terms of biological role, acts as a molecular scaffold that plays a key role in the organization of the endoplasmic reticulum exit sites (ERES), also known as transitional endoplasmic reticulum (tER). SAR1A-GTP-dependent assembly of SEC16A on the ER membrane forms an organized scaffold defining an ERES. Required for secretory cargo traffic from the endoplasmic reticulum to the Golgi apparatus. Mediates the recruitment of MIA3/TANGO to ERES. Regulates both conventional (ER/Golgi-dependent) and GORASP2-mediated unconventional (ER/Golgi-independent) trafficking of CFTR to cell membrane. Positively regulates the protein stability of E3 ubiquitin-protein ligases RNF152 and RNF183 and the ER localization of RNF183. Acts as a RAB10 effector in the regulation of insulin-induced SLC2A4/GLUT4 glucose transporter-enriched vesicles delivery to the cell membrane in adipocytes. The chain is Protein transport protein Sec16A (SEC16A) from Homo sapiens (Human).